Reading from the N-terminus, the 473-residue chain is Arginine biosynthesis bifunctional protein ArgJ, mitochondrial (473 aa).

Positions 201, 230, 241, 328, 468, and 473 each coordinate substrate. The active-site Nucleophile is the threonine 241.

Belongs to the ArgJ family. As to quaternary structure, heterodimer of an alpha and a beta chain. Post-translationally, the alpha and beta chains are autoproteolytically processed from a single precursor protein within the mitochondrion.

The protein resides in the mitochondrion matrix. The enzyme catalyses N(2)-acetyl-L-ornithine + L-glutamate = N-acetyl-L-glutamate + L-ornithine. It catalyses the reaction L-glutamate + acetyl-CoA = N-acetyl-L-glutamate + CoA + H(+). The protein operates within amino-acid biosynthesis; L-arginine biosynthesis; L-ornithine and N-acetyl-L-glutamate from L-glutamate and N(2)-acetyl-L-ornithine (cyclic): step 1/1. Its pathway is amino-acid biosynthesis; L-arginine biosynthesis; N(2)-acetyl-L-ornithine from L-glutamate: step 1/4. Functionally, catalyzes two activities which are involved in the cyclic version of arginine biosynthesis: the synthesis of acetylglutamate from glutamate and acetyl-CoA, and of ornithine by transacetylation between acetylornithine and glutamate. The chain is Arginine biosynthesis bifunctional protein ArgJ, mitochondrial from Paracoccidioides brasiliensis (strain Pb18).